A 577-amino-acid polypeptide reads, in one-letter code: Proline--tRNA ligase (577 aa).

The protein belongs to the class-II aminoacyl-tRNA synthetase family. ProS type 1 subfamily. Homodimer.

The protein resides in the cytoplasm. The enzyme catalyses tRNA(Pro) + L-proline + ATP = L-prolyl-tRNA(Pro) + AMP + diphosphate. In terms of biological role, catalyzes the attachment of proline to tRNA(Pro) in a two-step reaction: proline is first activated by ATP to form Pro-AMP and then transferred to the acceptor end of tRNA(Pro). As ProRS can inadvertently accommodate and process non-cognate amino acids such as alanine and cysteine, to avoid such errors it has two additional distinct editing activities against alanine. One activity is designated as 'pretransfer' editing and involves the tRNA(Pro)-independent hydrolysis of activated Ala-AMP. The other activity is designated 'posttransfer' editing and involves deacylation of mischarged Ala-tRNA(Pro). The misacylated Cys-tRNA(Pro) is not edited by ProRS. The sequence is that of Proline--tRNA ligase from Chlamydia caviae (strain ATCC VR-813 / DSM 19441 / 03DC25 / GPIC) (Chlamydophila caviae).